The chain runs to 501 residues: MGCGLRKLEDPDDSSPGKIFSTLKRPQVETKTEFAYEYVLLDFTLQASSNPEVIKINSILDIVTKVENYYLKGYIVGAIHPVIQPVGQRKHLPASYLYRVVLLRLKLSPKNSAAPSGQRRPRLVIEECPLTSEAQTNDAAKELIEKINVAAKRGMKFVGFISQHYSPSKFCNGTNHDGDIESMLHVRHGSDENCRSWNEGTLSGQSSESGIEEELHHESGQYQMEQNGSPTSSKSRKGEASDNKLYTVFNAFDDDSTSWAYQEGILSMKVTRKGSVISTLDADWLELTTFYYKQGLSLIDSFVFWETSKGEHLPKSLEGFFIYEEEGSGVPGSSRKGNDAIVVEQWTVIEGCEIKTDYGPLLHTLAEFGWLLTSVLPTPVLRHDSEGNLATKQIVFLQRPVMWNSAAQTPDKKASRHIKGEDKNKATSRSIGLDTTSSQPAESRHLPEECRLSPSRECWTKEGRLAQHNSFSGFSSSDNVLRELDDGQFDQEDGVTQVTCM.

Disordered stretches follow at residues 1-20 (MGCG…GKIF) and 196-239 (SWNE…RKGE). Residue Gly2 is the site of N-myristoyl glycine attachment. A lipid anchor (S-palmitoyl cysteine) is attached at Cys3. Over residues 220–233 (GQYQMEQNGSPTSS) the composition is skewed to polar residues. A Phosphoserine modification is found at Ser405. The tract at residues 407 to 449 (AQTPDKKASRHIKGEDKNKATSRSIGLDTTSSQPAESRHLPEE) is disordered. A Phosphothreonine modification is found at Thr409. Basic and acidic residues predominate over residues 410-425 (PDKKASRHIKGEDKNK). The span at 427-441 (TSRSIGLDTTSSQPA) shows a compositional bias: polar residues. Ser430 bears the Phosphoserine mark.

Belongs to the raftlin family.

It is found in the cell membrane. In terms of biological role, upon bacterial lipopolysaccharide stimulation, mediates clathrin-dependent internalization of TLR4 in dendritic cells, resulting in activation of TICAM1-mediated signaling and subsequent IFNB1 production. May regulate B-cell antigen receptor-mediated signaling. In Homo sapiens (Human), this protein is Raftlin-2 (RFTN2).